Here is a 247-residue protein sequence, read N- to C-terminus: 14-3-3 protein gamma-B (247 aa).

Belongs to the 14-3-3 family. Homodimer, and heterodimer with other family members.

The protein resides in the cytoplasm. Adapter protein implicated in the regulation of a large spectrum of both general and specialized signaling pathways. Binds to a large number of partners, usually by recognition of a phosphoserine or phosphothreonine motif. Binding generally results in the modulation of the activity of the binding partner. This Xenopus laevis (African clawed frog) protein is 14-3-3 protein gamma-B (ywhag-b).